Here is a 389-residue protein sequence, read N- to C-terminus: Succinate--CoA ligase [ADP-forming] subunit beta (389 aa).

The ATP-grasp domain maps to 9–244 (KAVLAKYGVP…LTEEDPAEVE (236 aa)). Residues Lys-46, 53 to 55 (GRG), Glu-99, Ser-102, and Glu-107 each bind ATP. 2 residues coordinate Mg(2+): Asn-199 and Asp-213. Substrate contacts are provided by residues Asn-264 and 321-323 (GIM).

It belongs to the succinate/malate CoA ligase beta subunit family. In terms of assembly, heterotetramer of two alpha and two beta subunits. Requires Mg(2+) as cofactor.

It carries out the reaction succinate + ATP + CoA = succinyl-CoA + ADP + phosphate. It catalyses the reaction GTP + succinate + CoA = succinyl-CoA + GDP + phosphate. The protein operates within carbohydrate metabolism; tricarboxylic acid cycle; succinate from succinyl-CoA (ligase route): step 1/1. Its function is as follows. Succinyl-CoA synthetase functions in the citric acid cycle (TCA), coupling the hydrolysis of succinyl-CoA to the synthesis of either ATP or GTP and thus represents the only step of substrate-level phosphorylation in the TCA. The beta subunit provides nucleotide specificity of the enzyme and binds the substrate succinate, while the binding sites for coenzyme A and phosphate are found in the alpha subunit. In Parvibaculum lavamentivorans (strain DS-1 / DSM 13023 / NCIMB 13966), this protein is Succinate--CoA ligase [ADP-forming] subunit beta.